A 144-amino-acid chain; its full sequence is MAAPSGSVNCEEFAEFQELLKVMRTIDDRIVHELNTTVPTASFAGKIDASQTCKQLYESLMAAHVSRDRVIKNCIAQTSAVVKSLREEREKNLDDLTLLKRLRKEQTKLKWMQSELNVEEVVNDRSWKVFNERCRVHFKPPKNE.

Ala-2 is modified (N-acetylalanine). The stretch at 82 to 120 forms a coiled coil; the sequence is VKSLREEREKNLDDLTLLKRLRKEQTKLKWMQSELNVEE. Lys-100 bears the N6-acetyllysine mark.

It belongs to the MIX23 family.

This Mus musculus (Mouse) protein is Protein MIX23.